The chain runs to 308 residues: ADP-L-glycero-D-manno-heptose-6-epimerase (308 aa).

Residues 10 to 11 (FI), 31 to 32 (DN), Lys-38, Lys-53, 75 to 79 (EGACS), and Asn-92 each bind NADP(+). The Proton acceptor role is filled by Tyr-139. Lys-143 is an NADP(+) binding site. A substrate-binding site is contributed by Asn-168. Val-169 and Lys-177 together coordinate NADP(+). The active-site Proton acceptor is Lys-177. Substrate-binding positions include Ser-179, His-186, 200–203 (FAGS), Arg-208, and Tyr-271.

The protein belongs to the NAD(P)-dependent epimerase/dehydratase family. HldD subfamily. In terms of assembly, homopentamer. NADP(+) serves as cofactor.

It carries out the reaction ADP-D-glycero-beta-D-manno-heptose = ADP-L-glycero-beta-D-manno-heptose. Its pathway is nucleotide-sugar biosynthesis; ADP-L-glycero-beta-D-manno-heptose biosynthesis; ADP-L-glycero-beta-D-manno-heptose from D-glycero-beta-D-manno-heptose 7-phosphate: step 4/4. In terms of biological role, catalyzes the interconversion between ADP-D-glycero-beta-D-manno-heptose and ADP-L-glycero-beta-D-manno-heptose via an epimerization at carbon 6 of the heptose. In Haemophilus influenzae (strain 86-028NP), this protein is ADP-L-glycero-D-manno-heptose-6-epimerase.